A 1041-amino-acid polypeptide reads, in one-letter code: Toll-like receptor 8 (1041 aa).

The signal sequence occupies residues 1–26 (MENMFLQSSMLTCIFLLISGSCELCA). The Extracellular portion of the chain corresponds to 27-827 (EENFSRSYPC…ELTTCVSDVT (801 aa)). N-linked (GlcNAc...) asparagine glycans are attached at residues Asn29, Asn42, Asn80, Asn88, and Asn115. Cys36 and Cys49 are oxidised to a cystine. LRR repeat units follow at residues 126–147 (NLRE…LPES), 148–168 (LTEL…GISR), 171–193 (NLKN…TNIE), 202–223 (NLEL…LPSS), 224–244 (LRKL…DFKG), and 247–268 (NLTL…FPCV). Asn160 carries an N-linked (GlcNAc...) asparagine glycan. Cys181 and Cys187 are joined by a disulfide. Asn247 carries N-linked (GlcNAc...) asparagine glycosylation. Cystine bridges form between Cys257/Cys270 and Cys260/Cys267. N-linked (GlcNAc...) asparagine glycans are attached at residues Asn285 and Asn293. 3 LRR repeats span residues 288-309 (QLRY…WFKN), 312-334 (HLKV…AFLT), and 338-360 (RLEI…INIS). Residues Asn358 and Asn362 are each glycosylated (N-linked (GlcNAc...) asparagine). LRR repeat units lie at residues 368-389 (SLRA…DFQP), 395-416 (NLST…LFQN), and 419-440 (NLEI…TRQS). Asn395 and Asn416 each carry an N-linked (GlcNAc...) asparagine glycan. Asn443 is a glycosylation site (N-linked (GlcNAc...) asparagine). An intrachain disulfide couples Cys479 to Cys509. 4 LRR repeats span residues 482–503 (YGKA…QFEN), 506–527 (DIAC…TEFS), 531–551 (HVKY…SALT), and 555–577 (DLEV…THHL). Asn511 and Asn546 each carry an N-linked (GlcNAc...) asparagine glycan. N-linked (GlcNAc...) asparagine glycans are attached at residues Asn582 and Asn590. LRR repeat units lie at residues 585 to 606 (NLKV…YNLE), 609 to 630 (SLVE…DDNR), 640 to 661 (NLTR…AFLN), 665 to 685 (SLTE…TLLQ), 689 to 710 (RLEL…LSDF), 713 to 734 (SLRT…FLSE), and 737 to 758 (SLKH…ALET). Asn640 and Asn680 each carry an N-linked (GlcNAc...) asparagine glycan. Asn752 is a glycosylation site (N-linked (GlcNAc...) asparagine). An LRRCT domain is found at 772 to 824 (NPFECTCDIGDFRRWMDEHLNVKIPRLVDVICASPGDQRGKSIVSLELTTCVS). Cys776 and Cys803 are joined by a disulfide. Residues 828–848 (AVILFFFTFFITTMVMLAALA) form a helical membrane-spanning segment. Topologically, residues 849-1041 (HHLFYWDVWF…NMYVDSIKQY (193 aa)) are cytoplasmic. Positions 878-1022 (TFYDAYISYD…LFWQTLRNVV (145 aa)) constitute a TIR domain.

This sequence belongs to the Toll-like receptor family. Homodimer. Interacts with MYD88 via their respective TIR domains. Interacts with UNC93B1. Interacts with BTK. Interacts with SMPDL3B. In terms of processing, ubiquitinated by RNF216; leading to degradation by the proteasome. Proteolytic processing occurs in monocytes and monocyte-derived macrophages by both furin-like proprotein convertase and cathepsins. The cleavage is necessary for dimer formation and subsequent activation. Expressed in myeloid dendritic cells, monocytes, and monocyte-derived dendritic cells.

Its subcellular location is the endosome membrane. Its activity is regulated as follows. Activated by RNAs having enough uridines. Its function is as follows. Endosomal receptor that plays a key role in innate and adaptive immunity. Controls host immune response against pathogens through recognition of RNA degradation products specific to microorganisms that are initially processed by RNASET2. Recognizes GU-rich single-stranded RNA (GU-rich RNA) derived from SARS-CoV-2, SARS-CoV-1 and HIV-1 viruses. Upon binding to agonists, undergoes dimerization that brings TIR domains from the two molecules into direct contact, leading to the recruitment of TIR-containing downstream adapter MYD88 through homotypic interaction. In turn, the Myddosome signaling complex is formed involving IRAK4, IRAK1, TRAF6, TRAF3 leading to activation of downstream transcription factors NF-kappa-B and IRF7 to induce pro-inflammatory cytokines and interferons, respectively. This chain is Toll-like receptor 8, found in Homo sapiens (Human).